A 763-amino-acid polypeptide reads, in one-letter code: MSELLSIALFLASVLIYAWKAGRNTWWFAAILAVLGLFVVLNITLYASDYFTGDGINDAVLYTLTNSLTGAGVSKYILPGAGIVLALAAVFSALGWVLRRRRHHPHHFGYSLLALLLALGSVDASPAFRQISELVKSQSRDGDPDFPAYYKEPSKTIPNPQLNLVYIYGESLERTYFDNDAFPDLTPELGALKNEGLDFSHTMQLPGTDYTIAGMVASQCGIPLFAPFEGNASASVSSFFPQNICLGDILKNSGYQNYFVQGANLRFAGKDVFLKSHGFDHLYGAEELKTVVADPSYRNDWGFYDDTVLDEAWKKFEELSRSGQRFSLFTLTVDTHHPDGFISRTCNRKRYDFDGKPNQSFSAVSCSQENIAEFINKIKASPWFKNTVIVVSSDHLAMNNTAWKYLNKQDRNNLFFVLRGDQPQQDTLAVKRNTMDNGATVLDILGGDNFIGLGRSSLSGQSLSEVFLNSKEKILAMKPDIIRLWNFPKEMKDFTVDRDKDMIAFSGSHFRLPLLLRVSDKRVEPLPESEYSAPLRFQLANFAPRDNFVWVDRCYKMAQLWAPELALSTDWCVSQGQLGGQQSIQHVDKAQWKGKTAFKDTVIDMERYKGNVDTLKIVDNDIRYKADSFIFNVAGAPEEVKQFSGISRPESWGRWSNAQLGDEVKIEYNTPLPKKFDLVITAKAFGANANRPIPVRVGKEEQTLVLENEVTTTTLHFDNPSNASTLVIVPPDPVSTNEGNILGHSPRKLGIGMVEIKVVNAEG.

The next 4 helical transmembrane spans lie at 1 to 21, 26 to 46, 77 to 97, and 108 to 128; these read MSEL…AWKA, WWFA…ITLY, ILPG…LGWV, and FGYS…SPAF.

This sequence belongs to the OpgB family.

It localises to the cell inner membrane. It catalyses the reaction a phosphatidylglycerol + a membrane-derived-oligosaccharide D-glucose = a 1,2-diacyl-sn-glycerol + a membrane-derived-oligosaccharide 6-(glycerophospho)-D-glucose.. The protein operates within glycan metabolism; osmoregulated periplasmic glucan (OPG) biosynthesis. Its function is as follows. Transfers a phosphoglycerol residue from phosphatidylglycerol to the membrane-bound nascent glucan backbones. The chain is Phosphoglycerol transferase I from Citrobacter koseri (strain ATCC BAA-895 / CDC 4225-83 / SGSC4696).